The sequence spans 225 residues: UPF0758 protein NGK_1225 (225 aa).

Positions 102 to 224 constitute an MPN domain; that stretch reads TLSDPDTVAD…VRSFRQLGLM (123 aa). Zn(2+)-binding residues include His173, His175, and Asp186. Positions 173–186 match the JAMM motif motif; that stretch reads HNHPGGSPEPSQED.

Belongs to the UPF0758 family.

The sequence is that of UPF0758 protein NGK_1225 from Neisseria gonorrhoeae (strain NCCP11945).